A 364-amino-acid chain; its full sequence is Aminomethyltransferase (364 aa).

The protein belongs to the GcvT family. In terms of assembly, the glycine cleavage system is composed of four proteins: P, T, L and H.

The catalysed reaction is N(6)-[(R)-S(8)-aminomethyldihydrolipoyl]-L-lysyl-[protein] + (6S)-5,6,7,8-tetrahydrofolate = N(6)-[(R)-dihydrolipoyl]-L-lysyl-[protein] + (6R)-5,10-methylene-5,6,7,8-tetrahydrofolate + NH4(+). Its function is as follows. The glycine cleavage system catalyzes the degradation of glycine. The protein is Aminomethyltransferase of Shewanella pealeana (strain ATCC 700345 / ANG-SQ1).